The primary structure comprises 730 residues: Synaptotagmin-like protein 5 (730 aa).

A RabBD domain is found at phenylalanine 7–glutamate 123. An FYVE-type zinc finger spans residues cysteine 64–cysteine 106. Serine 147 is subject to Phosphoserine. Disordered stretches follow at residues serine 147–leucine 188, glutamine 217–valine 271, and serine 294–aspartate 355. 2 stretches are compositionally biased toward polar residues: residues proline 248–valine 271 and threonine 305–glutamine 322. 2 C2 domains span residues valine 406–phenylalanine 527 and proline 563–methionine 694.

Binds RAB27A that has been activated by GTP-binding, and possibly also RAB3A and RAB6A. In terms of tissue distribution, highly expressed in placenta and liver.

It is found in the membrane. May act as Rab effector protein and play a role in vesicle trafficking. Binds phospholipids. The chain is Synaptotagmin-like protein 5 (SYTL5) from Homo sapiens (Human).